Reading from the N-terminus, the 238-residue chain is uncharacterized protein (238 aa).

Residues 3-116 enclose the Response regulatory domain; it reads RVIIVDDEQP…RLAKTLTRLS (114 aa). At Asp-54 the chain carries 4-aspartylphosphate. Positions 136 to 237 constitute an HTH LytTR-type domain; sequence IPCSGHNRIF…LKSLKEKLGI (102 aa).

This is an uncharacterized protein from Yersinia pestis.